The sequence spans 509 residues: UDP-N-acetylmuramoyl-L-alanyl-D-glutamate--2,6-diaminopimelate ligase (509 aa).

Residue serine 32 participates in UDP-N-acetyl-alpha-D-muramoyl-L-alanyl-D-glutamate binding. Residue 117–123 (GTNGKTT) coordinates ATP. Residues 159–160 (TT), serine 186, glutamine 192, and arginine 194 contribute to the UDP-N-acetyl-alpha-D-muramoyl-L-alanyl-D-glutamate site. Lysine 226 carries the N6-carboxylysine modification. Residues arginine 401, 425-428 (DNPR), glycine 476, and glutamate 480 contribute to the meso-2,6-diaminopimelate site. The short motif at 425 to 428 (DNPR) is the Meso-diaminopimelate recognition motif element.

Belongs to the MurCDEF family. MurE subfamily. Mg(2+) serves as cofactor. Carboxylation is probably crucial for Mg(2+) binding and, consequently, for the gamma-phosphate positioning of ATP.

It localises to the cytoplasm. It catalyses the reaction UDP-N-acetyl-alpha-D-muramoyl-L-alanyl-D-glutamate + meso-2,6-diaminopimelate + ATP = UDP-N-acetyl-alpha-D-muramoyl-L-alanyl-gamma-D-glutamyl-meso-2,6-diaminopimelate + ADP + phosphate + H(+). It functions in the pathway cell wall biogenesis; peptidoglycan biosynthesis. Catalyzes the addition of meso-diaminopimelic acid to the nucleotide precursor UDP-N-acetylmuramoyl-L-alanyl-D-glutamate (UMAG) in the biosynthesis of bacterial cell-wall peptidoglycan. The polypeptide is UDP-N-acetylmuramoyl-L-alanyl-D-glutamate--2,6-diaminopimelate ligase (Prochlorococcus marinus (strain NATL1A)).